A 35-amino-acid polypeptide reads, in one-letter code: Conotoxin Ca15a (35 aa).

A 4-hydroxyproline modification is found at Pro-8.

In terms of processing, contains 4 disulfide bonds. As to expression, expressed by the venom duct.

The protein resides in the secreted. This Conus caracteristicus (Characteristic cone) protein is Conotoxin Ca15a.